We begin with the raw amino-acid sequence, 759 residues long: Pseudocleavage protein nop-1 (759 aa).

Disordered regions lie at residues 1–46 (MSAP…SSIF), 334–361 (KIFPGKSESKDRRMSDNNQASEQYMDKK), 379–413 (LSVNDSASKNPKDLTESPQQPKLRKKTASSSNLSQ), 440–495 (QSSR…KKER), and 732–759 (ESDGPASSNDDFDTQSTASTSTVFGAKI). A compositionally biased stretch (basic and acidic residues) spans 10 to 42 (DIHSDDRDHADHQTKKEKHWFEEKSEQNGENRR). Positions 448 to 465 (TGNSSISSGVGSIASGTS) are enriched in low complexity. Over residues 473-482 (GSRSGQSISR) the composition is skewed to polar residues. Residues 485 to 495 (SRRDDEGKKER) show a composition bias toward basic and acidic residues. Positions 736-759 (PASSNDDFDTQSTASTSTVFGAKI) are enriched in polar residues.

Its subcellular location is the nucleus. It is found in the cytoplasm. The protein localises to the cell cortex. It localises to the cleavage furrow. Its function is as follows. Required for formation of the pseudocleavage furrow during the first cleavage of the embryo and also mediates aster-induced furrowing during cytokinesis. Promotes cortical recruitment of ani-1 and nmy-2 during pseudocleavage and cytokinesis and promotes the accumulation of actin at furrowing regions. Regulates establishment of embryonic cell polarity. The sequence is that of Pseudocleavage protein nop-1 (nop-1) from Caenorhabditis elegans.